The following is a 168-amino-acid chain: Gremlin-2 (168 aa).

An N-terminal signal peptide occupies residues 1–21 (MFWKLSLSLFLVAVLVKVAEA). N-linked (GlcNAc...) asparagine glycosylation occurs at Asn-40. Cystine bridges form between Cys-73/Cys-123, Cys-87/Cys-137, Cys-97/Cys-155, and Cys-101/Cys-157. In terms of domain architecture, CTCK spans 73–163 (CKTQPLRQTV…QCRCMSVNLS (91 aa)). The N-linked (GlcNAc...) asparagine glycan is linked to Asn-161.

The protein belongs to the DAN family. Homodimer. Interacts with BMP2, BMP4 and BMP7, but has lower affinity for BMP7 than for BMP2 and BMP4. Binds heparin; this impairs the interaction with BMP2. Post-translationally, N-glycosylated.

It localises to the secreted. Its function is as follows. Cytokine that inhibits the activity of BMP2 and BMP4 in a dose-dependent manner, and thereby modulates signaling by BMP family members. Contributes to the regulation of embryonic morphogenesis via BMP family members. Antagonizes BMP4-induced suppression of progesterone production in granulosa cells. The protein is Gremlin-2 (GREM2) of Homo sapiens (Human).